Consider the following 1331-residue polypeptide: NPC1-like intracellular cholesterol transporter 1 (1331 aa).

The N-terminal stretch at 1 to 20 is a signal peptide; that stretch reads MAAAWLGWLLWALLLSAAQG. Over 21 to 282 the chain is Extracellular; that stretch reads ELYTPKHEAG…RPSFYMGRMP (262 aa). Disulfide bonds link C32–C90, C38–C56, C77–C125, C91–C129, C113–C254, C116–C172, C189–C197, C243–C259, and C256–C263. Residues N53 and N85 are each glycosylated (N-linked (GlcNAc...) asparagine). A glycan (N-linked (GlcNAc...) asparagine) is linked at N138. The N-linked (GlcNAc...) asparagine glycan is linked to N244. The helical transmembrane segment at 283–303 threads the bilayer; that stretch reads GWLALIIIFTAVFVLLSAVLV. Topologically, residues 304-352 are cytoplasmic; it reads RLRVVSNRNKNKAEGPQEAPKLPHKHKLSPHTILGRFFQNWGTRVASWP. Residues 353-373 traverse the membrane as a helical segment; the sequence is LTVLALSFIVVIALAAGLTFI. Residues 374-632 are Extracellular-facing; the sequence is ELTTDPVELW…DEINRTTIQD (259 aa). Residues N416, N431, N464, N479, N497, and N506 are each glycosylated (N-linked (GlcNAc...) asparagine). C471 and C485 are joined by a disulfide. A disulfide bond links C525 and C542. N606 and N626 each carry an N-linked (GlcNAc...) asparagine glycan. The region spanning 632–797 is the SSD domain; the sequence is DLPVFAVSYI…MTAFVALLSL (166 aa). A helical membrane pass occupies residues 633–653; that stretch reads LPVFAVSYIIVFLYISLALGS. At 654 to 665 the chain is on the cytoplasmic side; that stretch reads YSRCSRVAVESK. Residues 666-686 traverse the membrane as a helical segment; that stretch reads ATLGLGGVIVVLGAVLAAMGF. The Extracellular portion of the chain corresponds to 687 to 696; sequence YSYLGVPSSL. A helical transmembrane segment spans residues 697–717; the sequence is VIIQVVPFLVLAVGADNIFIF. The Cytoplasmic segment spans residues 718 to 742; the sequence is VLEYQRLPRMPGEQREAHIGRTLGS. The helical transmembrane segment at 743–763 threads the bilayer; that stretch reads VAPSMLLCSLSEAICFFLGAL. The Extracellular segment spans residues 764–776; sequence TPMPAVRTFALTS. A helical membrane pass occupies residues 777-797; the sequence is GLAIILDFLLQMTAFVALLSL. Over 798–846 the chain is Cytoplasmic; that stretch reads DSKRQEASRPDVLCCFSTRKLPPPKEKEGLLLRFFRKIYAPFLLHRFIR. The helical transmembrane segment at 847–867 threads the bilayer; that stretch reads PVVMLLFLTLFGANLYLMCNI. The Extracellular segment spans residues 868–1113; the sequence is NVGLDQELAL…QQYLTVLPEG (246 aa). N-linked (GlcNAc...) asparagine glycosylation is found at N909 and N917. Intrachain disulfides connect C920/C925, C967/C1025, and C981/C990. N-linked (GlcNAc...) asparagine glycosylation is found at N996, N1038, and N1076. A helical transmembrane segment spans residues 1114-1134; sequence IFTLALCFVPTFVVCYLLLGL. At 1135 to 1142 the chain is on the cytoplasmic side; sequence DMCSGILN. A helical membrane pass occupies residues 1143 to 1163; that stretch reads LLSIIMILVDTIGLMAVWGIS. Topologically, residues 1164–1165 are extracellular; sequence YN. The helical transmembrane segment at 1166-1186 threads the bilayer; the sequence is AVSLINLVTAVGMSVEFVSHI. The Cytoplasmic segment spans residues 1187 to 1206; the sequence is TRSFAVSTKPTRLERAKDAT. The helical transmembrane segment at 1207–1227 threads the bilayer; it reads VFMGSAVFAGVAMTNFPGILI. Residues 1228–1242 lie on the Extracellular side of the membrane; that stretch reads LGFAQAQLIQIFFFR. The chain crosses the membrane as a helical span at residues 1243–1263; it reads LNLLITLLGLLHGLVFLPVVL. The Cytoplasmic segment spans residues 1264-1331; sequence SYLGPDVNQA…SSLPKSDQKF (68 aa).

The protein belongs to the patched family. Interacts with RAB11A, MYO5B and RAB11FIP2. Interaction with RAB11A, MYO5B and RAB11FIP2 is required for proper transport to the plasma membrane upon cholesterol depletion. Interacts with NPC2. Interacts with LIMA1. Highly glycosylated. In terms of tissue distribution, small intestine showed the highest level of expression. Expression in other tissues including gall bladder, liver, testis and stomach is also observed. Along the duodenum-ileum axis, the levels vary in different segments of the intestine with peak expression in the proximal jejunum. Protein expression is confined to the enterocyte. Discrete localization to the epithelial layer bordering the luminal space along the crypt-villus axis. Protein expression in the enterocyte is observed closest to the luminal space. Expression in enterocytes from the proximal (jejunum) but not in the distal (ileum) region.

It is found in the apical cell membrane. Its subcellular location is the cell membrane. The catalysed reaction is cholesterol(in) = cholesterol(out). It carries out the reaction sitosterol(out) = sitosterol(in). In terms of biological role, plays a major role in cholesterol homeostasis. Critical for the uptake of cholesterol across the plasma membrane of the intestinal enterocyte. Involved in plant sterol absorption, it transports sitosterol, although at lower rates than cholesterol. Is the direct molecular target of ezetimibe, a drug that inhibits cholesterol absorption and is approved for the treatment of hypercholesterolemia. May have a function in the transport of multiple lipids and their homeostasis, thereby influencing lipid metabolism regulation. May be involved in caveolin trafficking from the plasma membrane. Acts as a negative regulator of NPC2 and down-regulates its expression and secretion by inhibiting its maturation and accelerating its degradation. This chain is NPC1-like intracellular cholesterol transporter 1, found in Rattus norvegicus (Rat).